The sequence spans 409 residues: Elongation factor Tu, chloroplastic (409 aa).

The tr-type G domain maps to 10–214; that stretch reads KPHVNIGTIG…KIDEYIPTPE (205 aa). A G1 region spans residues 19–26; the sequence is GHVDHGKT. 19–26 is a GTP binding site; sequence GHVDHGKT. Mg(2+) is bound at residue Thr-26. Positions 60–64 are G2; the sequence is GITIN. The interval 81–84 is G3; the sequence is DCPG. Residues 81–85 and 136–139 contribute to the GTP site; these read DCPGH and NKAD. Residues 136–139 are G4; sequence NKAD. Residues 174–176 are G5; that stretch reads SAL.

This sequence belongs to the TRAFAC class translation factor GTPase superfamily. Classic translation factor GTPase family. EF-Tu/EF-1A subfamily.

It is found in the plastid. The protein localises to the chloroplast. It catalyses the reaction GTP + H2O = GDP + phosphate + H(+). Functionally, GTP hydrolase that promotes the GTP-dependent binding of aminoacyl-tRNA to the A-site of ribosomes during protein biosynthesis. The protein is Elongation factor Tu, chloroplastic (tufA) of Rhodomonas salina (Cryptomonas salina).